The chain runs to 140 residues: Thioredoxin M-type, chloroplastic (140 aa).

Residues 1 to 34 (MALVARRAAVPSARSSARPAFARAAPRRSVVVRA) constitute a chloroplast transit peptide. Residues 35–140 (EAGAVNDDTF…IVQTVEKYLN (106 aa)) form the Thioredoxin domain. Active-site nucleophile residues include cysteine 64 and cysteine 67. Cysteines 64 and 67 form a disulfide.

The protein belongs to the thioredoxin family. Plant M-type subfamily. As to quaternary structure, forms a complex with heterodimeric ferredoxin-thioredoxin reductase (FTR) and ferredoxin.

It localises to the plastid. It is found in the chloroplast. Functionally, participates in various redox reactions through the reversible oxidation of the active center dithiol to a disulfide. The M form is known to activate NADP-malate dehydrogenase. The sequence is that of Thioredoxin M-type, chloroplastic (TRXM) from Chlamydomonas reinhardtii (Chlamydomonas smithii).